The following is a 134-amino-acid chain: Waprin-Phi1 (134 aa).

A signal peptide spans 1–23 (MTLRRGSCPLLLFSLVGLLTTCA). WAP domains lie at 36–82 (VAEK…SCQI) and 83–133 (PDEK…TTAR). 8 disulfides stabilise this stretch: Cys-43–Cys-72, Cys-55–Cys-76, Cys-59–Cys-71, Cys-65–Cys-80, Cys-90–Cys-120, Cys-103–Cys-124, Cys-107–Cys-119, and Cys-113–Cys-129.

The protein belongs to the venom waprin family. As to expression, expressed by the venom gland.

The protein resides in the secreted. Its function is as follows. Damages membranes of susceptible bacteria. Has no hemolytic activity. Not toxic to mice. Does not inhibit the proteinases elastase and cathepsin G. The polypeptide is Waprin-Phi1 (Philodryas olfersii (Green snake)).